The primary structure comprises 338 residues: Probable G-protein coupled receptor 160 (338 aa).

Over 1 to 23 (MTALSSENCSFQYQLRQTNQPLD) the chain is Extracellular. Asparagine 8 carries N-linked (GlcNAc...) asparagine glycosylation. A helical transmembrane segment spans residues 24-44 (VNYLLFLIILGKILLNILTLG). The Cytoplasmic portion of the chain corresponds to 45–58 (MRRKNTCQNFMEYF). The helical transmembrane segment at 59-79 (CISLAFVDLLLLVNISIILYF) threads the bilayer. At 80-93 (RDFVLLSIRFTKYH) the chain is on the extracellular side. A helical transmembrane segment spans residues 94 to 114 (ICLFTQIISFTYGFLHYPVFL). Residues 115–136 (TACIDYCLNFSKTTKLSFKCQK) lie on the Cytoplasmic side of the membrane. The helical transmembrane segment at 137 to 157 (LFYFFTVILIWISVLAYVLGD) threads the bilayer. The Extracellular portion of the chain corresponds to 158–177 (PAIYQSLKAQNAYSRHCPFY). A helical transmembrane segment spans residues 178-198 (VSIQSYWLSFFMVMILFVAFI). Residues 199–244 (TCWEEVTTLVQAIRITSYMNETILYFPFSSHSSYTVRSKKIFLSKL) are Cytoplasmic-facing. The chain crosses the membrane as a helical span at residues 245-265 (IVCFLSTWLPFVLLQVIIVLL). The Extracellular segment spans residues 266–268 (KVQ). Residues 269 to 289 (IPAYIEMNIPWLYFVNSFLIA) form a helical membrane-spanning segment. Topologically, residues 290-338 (TVYWFNCHKLNLKDIGLPLDPFVNWKCCFIPLTIPNLEQIEKPISIMIC) are cytoplasmic.

The protein belongs to the G-protein coupled receptor 1 family.

Its subcellular location is the cell membrane. In terms of biological role, orphan receptor. The polypeptide is Probable G-protein coupled receptor 160 (GPR160) (Homo sapiens (Human)).